The following is a 185-amino-acid chain: Biofilm operon icaADBC HTH-type negative transcriptional regulator IcaR (185 aa).

One can recognise an HTH tetR-type domain in the interval 1–59 (MKDKIIDNAITLFSEKGYDGTTLDDISKSVNIKKASLYYHYDNKEEIYRKSVENCFNYF). Positions 22–41 (TLDDISKSVNIKKASLYYHY) form a DNA-binding region, H-T-H motif.

As to quaternary structure, homodimer.

Its function is as follows. Represses transcription of the icaADBC operon necessary for biofilm production. In Staphylococcus epidermidis (strain ATCC 35984 / DSM 28319 / BCRC 17069 / CCUG 31568 / BM 3577 / RP62A), this protein is Biofilm operon icaADBC HTH-type negative transcriptional regulator IcaR (icaR).